The primary structure comprises 383 residues: PqqA peptide cyclase (383 aa).

The region spanning 11 to 226 is the Radical SAM core domain; sequence PGPPLWLLAE…TNQWREKLAA (216 aa). The [4Fe-4S] cluster site is built by Cys25, Cys29, and Cys32.

It belongs to the radical SAM superfamily. PqqE family. Interacts with PqqD. The interaction is necessary for activity of PqqE. The cofactor is [4Fe-4S] cluster.

The enzyme catalyses [PQQ precursor protein] + S-adenosyl-L-methionine = E-Y cross-linked-[PQQ precursor protein] + 5'-deoxyadenosine + L-methionine + H(+). It participates in cofactor biosynthesis; pyrroloquinoline quinone biosynthesis. In terms of biological role, catalyzes the cross-linking of a glutamate residue and a tyrosine residue in the PqqA protein as part of the biosynthesis of pyrroloquinoline quinone (PQQ). This is PqqA peptide cyclase from Azotobacter vinelandii (strain DJ / ATCC BAA-1303).